The sequence spans 393 residues: Cell division protein FtsZ 2 (393 aa).

The segment at 1 to 28 is disordered; it reads MQDIVQDALDNAEAEQREMDGDGDGDEF. GTP contacts are provided by residues 40–44, 127–129, E158, R161, and D204; these read GAGNN and GTG. Residues 339 to 393 are disordered; that stretch reads GPSTQKQADKSRRELQDVDSKQRAADDAGAGGFGGAHSDGGQDEVEQENGLDVIR. The segment covering 345-364 has biased composition (basic and acidic residues); that stretch reads QADKSRRELQDVDSKQRAAD. Over residues 367–376 the composition is skewed to gly residues; it reads GAGGFGGAHS.

The protein belongs to the FtsZ family. Homodimer. Polymerizes to form a dynamic ring structure in a strictly GTP-dependent manner. Interacts directly with several other division proteins.

It is found in the cytoplasm. Its function is as follows. Essential cell division protein that forms a contractile ring structure (Z ring) at the future cell division site. The regulation of the ring assembly controls the timing and the location of cell division. One of the functions of the FtsZ ring is to recruit other cell division proteins to the septum to produce a new cell wall between the dividing cells. Binds GTP and shows GTPase activity. Overexpression causes significant changes in cell morphology. The polypeptide is Cell division protein FtsZ 2 (Halobacterium salinarum (strain ATCC 29341 / DSM 671 / R1)).